We begin with the raw amino-acid sequence, 213 residues long: Large ribosomal subunit protein uL3 (213 aa).

This sequence belongs to the universal ribosomal protein uL3 family. As to quaternary structure, part of the 50S ribosomal subunit. Forms a cluster with proteins L14 and L19.

Functionally, one of the primary rRNA binding proteins, it binds directly near the 3'-end of the 23S rRNA, where it nucleates assembly of the 50S subunit. In Bifidobacterium longum (strain DJO10A), this protein is Large ribosomal subunit protein uL3.